We begin with the raw amino-acid sequence, 33 residues long: uncharacterized protein (33 aa).

A disordered region spans residues 1-33 (MGSVIKKRRKRMSKKKHRKLLRRTRVQRRKLGK).

This is an uncharacterized protein from Mycobacterium tuberculosis (strain CDC 1551 / Oshkosh).